A 70-amino-acid polypeptide reads, in one-letter code: Palustrin-2ISa (70 aa).

The first 22 residues, 1–22 (MFTLKKSLLLLFFLGTISLSLC), serve as a signal peptide directing secretion. Residues 23-39 (EQERSAEDEGEVIEEEV) constitute a propeptide, removed in mature form. Cysteines 64 and 70 form a disulfide.

As to expression, expressed by the skin glands.

The protein localises to the secreted. In terms of biological role, has antimicrobial activity against Gram-negative bacterium E.coli ATCC 8739 (MIC=100 ug), against Gram positive bacteria S.aureus ATCC 6538 (MIC=25 ug), methicillin-resistant S.aureus ATCC 43300 (MIC=100 ug), B.subtilis ATCC 6633 (MIC=12.5 ug) and against fungus C.albicans ATCC 90028 (MIC=100 ug). The polypeptide is Palustrin-2ISa (Odorrana ishikawae (Ishikawa's frog)).